A 581-amino-acid polypeptide reads, in one-letter code: Zinc finger protein 319 (581 aa).

Residues methionine 1–glutamine 22 show a composition bias toward low complexity. A disordered region spans residues methionine 1–glycine 39. The C2H2-type 1 zinc finger occupies proline 75–histidine 99. A C2H2-type 2; degenerate zinc finger spans residues phenylalanine 103–glutamine 125. A Glycyl lysine isopeptide (Lys-Gly) (interchain with G-Cter in SUMO2) cross-link involves residue lysine 129. C2H2-type zinc fingers lie at residues phenylalanine 131–histidine 153, tyrosine 201–histidine 223, tyrosine 229–histidine 251, and tyrosine 257–histidine 279. Serine 280 is subject to Phosphoserine. The segment at phenylalanine 286 to proline 308 adopts a C2H2-type 7; degenerate zinc-finger fold. 3 consecutive C2H2-type zinc fingers follow at residues phenylalanine 314–histidine 336, phenylalanine 342–histidine 364, and phenylalanine 370–histidine 392. Residues phenylalanine 398–proline 420 form a C2H2-type 11; degenerate zinc finger. Residues phenylalanine 427–histidine 449 form a C2H2-type 12 zinc finger. The C2H2-type 13; degenerate zinc finger occupies leucine 457–proline 479. 3 C2H2-type zinc fingers span residues leucine 485–histidine 507, tyrosine 513–histidine 535, and phenylalanine 541–histidine 563.

It belongs to the krueppel C2H2-type zinc-finger protein family.

The protein resides in the nucleus. Its function is as follows. May be involved in transcriptional regulation. The sequence is that of Zinc finger protein 319 (Znf319) from Mus musculus (Mouse).